A 540-amino-acid polypeptide reads, in one-letter code: MAKEIKFSEDARQSMLRGVDQLANAVKVTIGPKGRNVVLDKEYGAPLITNDGVTIAKEIELEDPYENMGAKLVQEVANKTNEIAGDGTTTATVLAQAMIQEGLKNVTSGANPVGLRKGIDKAVTEAVKSLHEQSQKVENKNEIAQVGAISAADEEIGQYISEAMDKVGNDGVISIEESNGFNTELEVVEGMQFDRGYQSPYMVTDSEKMEADLERPYILVTDKKISSFQDILPLLEQIVQSNRPILIIADEVEGDALTNIVLNRMRGTFTAVAVKAPGFGDRRKSMLEDIAILTGAQFITDDLGYDLKDATVDMLGTANKVEVTKDNTTIVNGDGDKNSIDARVTQLKSQIEETNSDFDREKLQERLAKLTGGVAVIKVGAASETELKERKLRIEDALNSTRAAVGEGIVAGGGTALVNVYKQVSEIEAEGDVETGINIVLKALEAPVRQIAENAGLEGSIIVEKLKHAEPGIGYNAATDEWVNMLDAGIVDPTKVTRSALQNAASVAAMFLTTEAVVAKLPEENNDAGGPAMGGMSGMM.

Residues 29–32, 86–90, glycine 413, 476–478, and aspartate 492 contribute to the ATP site; these read TIGP, DGTTT, and NAA.

The protein belongs to the chaperonin (HSP60) family. In terms of assembly, forms a cylinder of 14 subunits composed of two heptameric rings stacked back-to-back. Interacts with the co-chaperonin GroES.

It is found in the cytoplasm. The catalysed reaction is ATP + H2O + a folded polypeptide = ADP + phosphate + an unfolded polypeptide.. In terms of biological role, together with its co-chaperonin GroES, plays an essential role in assisting protein folding. The GroEL-GroES system forms a nano-cage that allows encapsulation of the non-native substrate proteins and provides a physical environment optimized to promote and accelerate protein folding. This Staphylococcus carnosus (strain TM300) protein is Chaperonin GroEL.